The following is a 418-amino-acid chain: uncharacterized protein (418 aa).

Residues 282-297 (EEHSSIAKLDSEEKIR) are compositionally biased toward basic and acidic residues. Residues 282 to 346 (EEHSSIAKLD…SASVDDVSEE (65 aa)) are disordered. The span at 304 to 316 (SSTSLSPDPTSDN) shows a compositional bias: low complexity. Positions 322–337 (WVSSQDTSKNSSNLAS) are enriched in polar residues.

This is an uncharacterized protein from Schizosaccharomyces pombe (strain 972 / ATCC 24843) (Fission yeast).